We begin with the raw amino-acid sequence, 109 residues long: MSAQPVDIQIFGRSLRVNCPPEQQDALNMAAEDLNQRLQDLKVRTRVTNTEQLVFIAALNVCHELAQERLKTRDYASNMEQRIRMLQQTIEQALLEQGRISERQDAQFE.

Positions 22-99 form a coiled coil; the sequence is EQQDALNMAA…IEQALLEQGR (78 aa).

This sequence belongs to the ZapA family. Type 1 subfamily. In terms of assembly, homodimer. Interacts with FtsZ.

The protein localises to the cytoplasm. Functionally, activator of cell division through the inhibition of FtsZ GTPase activity, therefore promoting FtsZ assembly into bundles of protofilaments necessary for the formation of the division Z ring. It is recruited early at mid-cell but it is not essential for cell division. The polypeptide is Cell division protein ZapA (Yersinia enterocolitica serotype O:8 / biotype 1B (strain NCTC 13174 / 8081)).